A 221-amino-acid chain; its full sequence is NEDD4 family-interacting protein 1 (221 aa).

Ala-2 bears the N-acetylalanine mark. The tract at residues 2 to 41 (ALALAALAAVEPACGSRYQQLQNEEESGEPEQAAGDAPPP) is interaction with UBE2L3. Topologically, residues 2-116 (ALALAALAAV…ADQLRIGNDG (115 aa)) are cytoplasmic. Residues 18–45 (RYQQLQNEEESGEPEQAAGDAPPPYSSI) form a disordered region. 3 consecutive short sequence motifs (PPxY motif) follow at residues 39–42 (PPPY), 64–67 (PPSY), and 74–76 (PSY). The interval 42 to 76 (YSSISAESAAYFDYKDESGFPKPPSYNVATTLPSY) is interaction with ITCH. Residues 117 to 137 (IFMLTFFMAFLFNWIGFFLSF) form a helical membrane-spanning segment. Over 138–143 (CLTTSA) the chain is Extracellular. A helical membrane pass occupies residues 144–164 (AGRYGAISGFGLSLIKWILIV). Residues 165 to 172 (RFSTYFPG) lie on the Cytoplasmic side of the membrane. A helical transmembrane segment spans residues 173–193 (YFDGQYWLWWVFLVLGFLLFL). Topologically, residues 194-221 (RGFINYAKVRKMPETFSNLPRTRVLFIY) are extracellular.

Forms heterodimers with NDFIP2. Interacts with several E3 ubiquitin-protein ligases, including ITCH, NEDD4, NEDD4L and WWP2. The interaction with NEDD4, NEDD4L and ITCH leads to relocalization of these proteins to exosomes and eventually to exosomal secretion. Interacts with U2SURP. Interacts with SLC11A2/DMT1. Interacts with PTEN. May interact with phosphorylated EGFR. Interacts with BRAT1. Interacts with KCNH2. Interacts with MAVS. Part of a complex containing ITCH, NDFIP1 and MAP3K7. Interacts (via N-terminus) with UBE2L3; the interaction mediates recruitment of UBE2L3 to ITCH. In terms of processing, ubiquitinated by NEDD4 and ITCH; mono-, di- and polyubiquitinated forms are detected. Ubiquitination regulates its degradation. Post-translationally, undergoes transient tyrosine phosphorylation following EGF stimulation, most probably by catalyzed by SRC. Phosphorylation SRC is enhanced in the presence of NDFIP2 which may act as a scaffold to recruit SRC to NDFIP1. As to expression, widely expressed. Higher levels are detected in cerebellum, pituitary, thalamus, kidney, liver, testis, salivary glands and placenta. Also expressed in fetal brain, kidney and lung.

It is found in the endosome membrane. It localises to the golgi apparatus membrane. The protein resides in the synapse. Its subcellular location is the synaptosome. The protein localises to the cell projection. It is found in the dendrite. It localises to the secreted. In terms of biological role, activates HECT domain-containing E3 ubiquitin-protein ligases, including NEDD4 and ITCH, and consequently modulates the stability of their targets. As a result, controls many cellular processes. Prevents chronic T-helper cell-mediated inflammation by activating ITCH and thus controlling JUNB degradation. Promotes pancreatic beta cell death through degradation of JUNB and inhibition of the unfolded protein response, leading to reduction of insulin secretion. Restricts the production of pro-inflammatory cytokines in effector Th17 T-cells by promoting ITCH-mediated ubiquitination and degradation of RORC. Together with NDFIP2, limits the cytokine signaling and expansion of effector Th2 T-cells by promoting degradation of JAK1, probably by ITCH- and NEDD4L-mediated ubiquitination. Regulates peripheral T-cell tolerance to self and foreign antigens, forcing the exit of naive CD4+ T-cells from the cell cycle before they become effector T-cells. Negatively regulates RLR-mediated antiviral response by promoting SMURF1-mediated ubiquitination and subsequent degradation of MAVS. Negatively regulates KCNH2 potassium channel activity by decreasing its cell-surface expression and interfering with channel maturation through recruitment of NEDD4L to the Golgi apparatus where it mediates KCNH2 degradation. In cortical neurons, mediates the ubiquitination of the divalent metal transporter SLC11A2/DMT1 by NEDD4L, leading to its down-regulation and protection of the cells from cobalt and iron toxicity. Important for normal development of dendrites and dendritic spines in cortex. Enhances the ubiquitination of BRAT1 mediated by: NEDD4, NEDD4L and ITCH and is required for the nuclear localization of ubiquitinated BRAT1. Enhances the ITCH-mediated ubiquitination of MAP3K7 by recruiting E2 ubiquitin-conjugating enzyme UBE2L3 to ITCH. Modulates EGFR signaling through multiple pathways. In particular, may regulate the ratio of AKT1-to-MAPK8 signaling in response to EGF, acting on AKT1 probably through PTEN destabilization and on MAPK8 through ITCH-dependent MAP2K4 inactivation. As a result, may control cell growth rate. Inhibits cell proliferation by promoting PTEN nuclear localization and changing its signaling specificity. The chain is NEDD4 family-interacting protein 1 (NDFIP1) from Homo sapiens (Human).